The chain runs to 345 residues: Low-density lipoprotein receptor class A domain-containing protein 3 (345 aa).

An N-terminal signal peptide occupies residues 1–17; it reads MWLLGPLCLLLSSAAES. The Extracellular portion of the chain corresponds to 18 to 173; sequence QLLPGNNFTN…NQLVYYPSIT (156 aa). Asn-24 carries an N-linked (GlcNAc...) asparagine glycan. 3 LDL-receptor class A domains span residues 28–65, 70–107, and 112–148; these read ECNI…KECP, KCGP…ENCT, and LCST…ESCE. 9 cysteine pairs are disulfide-bonded: Cys-29-Cys-42, Cys-37-Cys-55, Cys-49-Cys-64, Cys-71-Cys-84, Cys-78-Cys-97, Cys-91-Cys-106, Cys-113-Cys-125, Cys-120-Cys-138, and Cys-132-Cys-147. The (Microbial infection) Interaction with Venezuelan equine encephalitis virus/VEEV spike proteins E1 and E2 stretch occupies residues 30-57; sequence NIPGNFMCSNGRCIPGAWQCDGLPDCFD. A helical membrane pass occupies residues 174-194; it reads YAIIGSSVIFVLVVALLALVL. Topologically, residues 195-345 are cytoplasmic; it reads HHQRKRNNLM…SEPSQGTEEV (151 aa). 2 consecutive short sequence motifs (involved in ITCH interaction) follow at residues 256–259 and 275–278; these read PPSY and PPPY. The disordered stretch occupies residues 270–345; the sequence is WYDLPPPPYS…SEPSQGTEEV (76 aa). The span at 295–313 shows a compositional bias: low complexity; it reads SRSGSANSASSQAASSLLS.

Belongs to the LDLR family. Interacts with APP precursor C-terminus. Interacts directly with ITCH; this interaction promotes ITCH auto-ubiquitination leading to its degradation. Interacts directly with NEDD4; this interaction promotes NEDD4 auto-ubiquitination. Interacts directly with NEDD4L. As to quaternary structure, (Microbial infection) Interacts (via domain LDL-receptor class A 1) with Venezuelan equine encephalitis virus/VEEV spike proteins E1 and E2. In terms of tissue distribution, expressed at high levels in brain, lung, skeletal muscle, and pancreas. Expressed at moderate levels in heart, placenta, and kidney but not detected in the liver.

It localises to the cell membrane. In terms of biological role, may influence APP processing, resulting in a decrease in sAPP-alpha production and increased amyloidogenic P3 peptide production. May regulate ITCH and NEDD4 E3 ligase activity and degradation. (Microbial infection) Acts as a receptor for Venezuelan equine encephalitis virus. This Homo sapiens (Human) protein is Low-density lipoprotein receptor class A domain-containing protein 3.